A 2214-amino-acid chain; its full sequence is Multifunctional protein URA2 (2214 aa).

Ala2 carries the N-acetylalanine modification. A GATase (Glutamine amidotransferase) region spans residues 2–400 (ATIAPTAPIT…PGPRDTEFLF (399 aa)). Residues Ser64, Gly273, and Gly275 each contribute to the L-glutamine site. The Glutamine amidotransferase type-1 domain maps to 228–413 (RILAIDVGMK…IQAVKEFKYT (186 aa)). Cys302 (nucleophile; for GATase activity) is an active-site residue. Positions 303, 306, 344, 346, and 347 each coordinate L-glutamine. Residues His386 and Glu388 each act as for GATase activity in the active site. The tract at residues 401-440 (DVFIQAVKEFKYTQVLKPIAFPGGLLEDNVKAHPRIEAKK) is linker. Residues 440 to 980 (KVLVLGSGGL…DSHDLSFDDH (541 aa)) are CPSase A. The segment at 440 to 1482 (KVLVLGSGGL…TNVKCAKLLI (1043 aa)) is CPSase (Carbamoyl phosphate synthase). Residues Arg558, Arg598, Gly604, Gly605, Lys635, Met637, Glu642, Gly668, Ile669, His670, Gln711, and Glu725 each coordinate ATP. ATP-grasp domains lie at 562–754 (SNAI…KLGL) and 1099–1290 (SRML…KAIM). Mg(2+) is bound by residues Gln711, Glu725, and Asn727. Positions 711, 725, and 727 each coordinate Mn(2+). Positions 981–1482 (GVMVLGSGVY…TNVKCAKLLI (502 aa)) are CPSase B. The ATP site is built by Arg1135, Lys1174, Ile1176, Glu1181, Gly1206, Val1207, His1208, Ser1209, Gln1249, and Glu1261. Mg(2+) contacts are provided by Gln1249, Glu1261, and Asn1263. Residues Gln1249, Glu1261, and Asn1263 each contribute to the Mn(2+) site. An MGS-like domain is found at 1356–1508 (FKLPKKNILL…QTSHRTITLP (153 aa)). The interval 1483 to 1492 (EAISRNITLD) is linker. A defective DHOase domain region spans residues 1493 to 1821 (VSERDAQTSH…YNGETLVLSG (329 aa)). A linker region spans residues 1822–1909 (ELVSPGAKGK…NLIRSNNPFR (88 aa)). Residue Lys1853 forms a Glycyl lysine isopeptide (Lys-Gly) (interchain with G-Cter in ubiquitin) linkage. Position 1857 is a phosphoserine; by PKA (Ser1857). Residues 1910–2214 (GRHILSIKQF…LLAMVMGVDM (305 aa)) form an ATCase (Aspartate transcarbamylase) region. Carbamoyl phosphate contacts are provided by Arg1962 and Thr1963. Residue Lys1990 coordinates L-aspartate. Residues Arg2011, His2039, and Gln2042 each coordinate carbamoyl phosphate. L-aspartate is bound by residues Arg2072 and Arg2134. Carbamoyl phosphate contacts are provided by Leu2173 and Pro2174.

The protein in the N-terminal section; belongs to the CarA family. In the 2nd section; belongs to the CarB family. This sequence in the 3rd section; belongs to the metallo-dependent hydrolases superfamily. DHOase family. CAD subfamily. It in the C-terminal section; belongs to the aspartate/ornithine carbamoyltransferase superfamily. ATCase family. The cofactor is Mg(2+). Mn(2+) is required as a cofactor.

The protein resides in the cytoplasm. It carries out the reaction hydrogencarbonate + L-glutamine + 2 ATP + H2O = carbamoyl phosphate + L-glutamate + 2 ADP + phosphate + 2 H(+). The enzyme catalyses L-glutamine + H2O = L-glutamate + NH4(+). The catalysed reaction is hydrogencarbonate + NH4(+) + 2 ATP = carbamoyl phosphate + 2 ADP + phosphate + 2 H(+). It catalyses the reaction carbamoyl phosphate + L-aspartate = N-carbamoyl-L-aspartate + phosphate + H(+). It functions in the pathway pyrimidine metabolism; UMP biosynthesis via de novo pathway; (S)-dihydroorotate from bicarbonate: step 1/3. Its pathway is pyrimidine metabolism; UMP biosynthesis via de novo pathway; (S)-dihydroorotate from bicarbonate: step 2/3. Both CPSase and ATCase activities are feedback inhibited by the end product UTP. Functionally, multifunctional protein that encodes the first 2 enzymatic activities of the de novo pyrimidine pathway: carbamoylphosphate synthetase (CPSase; EC 6.3.5.5) and aspartate transcarbamylase (ATCase; EC 2.1.3.2). The CPSase-function is accomplished in 2 steps, by a glutamine-dependent amidotransferase activity (GATase) that binds and cleaves glutamine to produce ammonia, followed by an ammonium-dependent carbamoyl phosphate synthetase, which reacts with the ammonia, hydrogencarbonate and ATP to form carbamoyl phosphate. The endogenously produced carbamoyl phosphate is sequestered and channeled to the ATCase active site. ATCase then catalyzes the formation of carbamoyl-L-aspartate from L-aspartate and carbamoyl phosphate. The protein is Multifunctional protein URA2 (URA2) of Saccharomyces cerevisiae (strain ATCC 204508 / S288c) (Baker's yeast).